A 2763-amino-acid chain; its full sequence is Large tegument protein deneddylase (2763 aa).

Residues 1–247 form a deubiquitination activity region; it reads MDIIPPIAVT…CDTYFTDEQY (247 aa). Residues 12–237 enclose the Peptidase C76 domain; it reads AGVGSRNQFD…SSAVTLIYGS (226 aa). Active-site residues include C32, D168, and H170. The segment at 495 to 523 is interaction with inner tegument protein; that stretch reads LELFINLTILRLTGFVVENGTRTHHGATS. 8 repeat units span residues 2455-2457, 2458-2460, 2461-2463, 2464-2466, 2467-2469, 2470-2472, 2473-2475, and 2476-2478. The tract at residues 2455–2478 is 8 X 3 AA repeats of P-A/V-Q; it reads PVQPVQPAQPVQPAQPAQPVQPAQ. Positions 2630–2651 are disordered; the sequence is NYKTRQPSPNFPRDVHTWGVSS.

It belongs to the herpesviridae large tegument protein family. As to quaternary structure, interacts with host CUL1 and CUL4A; these interactions inhibit the E3 ligase activity of cullins. Interacts with inner tegument protein. Interacts with capsid vertex specific component CVC2. Interacts with the major capsid protein/MCP.

It localises to the virion tegument. Its subcellular location is the host cytoplasm. The protein localises to the host nucleus. The enzyme catalyses Thiol-dependent hydrolysis of ester, thioester, amide, peptide and isopeptide bonds formed by the C-terminal Gly of ubiquitin (a 76-residue protein attached to proteins as an intracellular targeting signal).. Its function is as follows. Large tegument protein that plays multiple roles in the viral cycle. During viral entry, remains associated with the capsid while most of the tegument is detached and participates in the capsid transport toward the host nucleus. Plays a role in the routing of the capsid at the nuclear pore complex and subsequent uncoating. Within the host nucleus, acts as a deneddylase and promotes the degradation of nuclear CRLs (cullin-RING ubiquitin ligases) and thereby stabilizes nuclear CRL substrates, while cytoplasmic CRLs remain unaffected. These modifications prevent host cell cycle S-phase progression and create a favorable environment allowing efficient viral genome replication. Participates later in the secondary envelopment of capsids. Indeed, plays a linker role for the association of the outer viral tegument to the capsids together with the inner tegument protein. This is Large tegument protein deneddylase from Varicella-zoster virus (strain Oka vaccine) (HHV-3).